The sequence spans 429 residues: Enolase (429 aa).

Position 162 (Gln162) interacts with (2R)-2-phosphoglycerate. The active-site Proton donor is Glu204. Mg(2+)-binding residues include Asp241, Glu283, and Asp310. Residues Lys335, Arg364, Ser365, and Lys386 each contribute to the (2R)-2-phosphoglycerate site. The Proton acceptor role is filled by Lys335.

Belongs to the enolase family. Mg(2+) is required as a cofactor.

The protein localises to the cytoplasm. It is found in the secreted. The protein resides in the cell surface. The enzyme catalyses (2R)-2-phosphoglycerate = phosphoenolpyruvate + H2O. The protein operates within carbohydrate degradation; glycolysis; pyruvate from D-glyceraldehyde 3-phosphate: step 4/5. Functionally, catalyzes the reversible conversion of 2-phosphoglycerate (2-PG) into phosphoenolpyruvate (PEP). It is essential for the degradation of carbohydrates via glycolysis. The polypeptide is Enolase (Mycobacterium bovis (strain BCG / Pasteur 1173P2)).